We begin with the raw amino-acid sequence, 126 residues long: MHRSHRLKKNEQFQAVFQRGSSAANKQFVLYSAKQEGQAAFRAGISVSKKIGNAVVRNRVKRLIREAVARMESDIPVGLDLVIIARPGVEAMTLEAIEQSLLHVMKRAKVIKQAPVHNGKRDGKRG.

Belongs to the RnpA family. As to quaternary structure, consists of a catalytic RNA component (M1 or rnpB) and a protein subunit.

The enzyme catalyses Endonucleolytic cleavage of RNA, removing 5'-extranucleotides from tRNA precursor.. Functionally, RNaseP catalyzes the removal of the 5'-leader sequence from pre-tRNA to produce the mature 5'-terminus. It can also cleave other RNA substrates such as 4.5S RNA. The protein component plays an auxiliary but essential role in vivo by binding to the 5'-leader sequence and broadening the substrate specificity of the ribozyme. This chain is Ribonuclease P protein component, found in Brevibacillus brevis (strain 47 / JCM 6285 / NBRC 100599).